We begin with the raw amino-acid sequence, 480 residues long: Proline--tRNA ligase (480 aa).

It belongs to the class-II aminoacyl-tRNA synthetase family. ProS type 3 subfamily. Homodimer.

It is found in the cytoplasm. It carries out the reaction tRNA(Pro) + L-proline + ATP = L-prolyl-tRNA(Pro) + AMP + diphosphate. Catalyzes the attachment of proline to tRNA(Pro) in a two-step reaction: proline is first activated by ATP to form Pro-AMP and then transferred to the acceptor end of tRNA(Pro). The chain is Proline--tRNA ligase from Mycobacterium leprae (strain Br4923).